The primary structure comprises 163 residues: MSNINLTTLDISEHPNLPTSSAVLFKAKADKRLSFEKIASHIGRNEVATAAIFYGQAKASAEDIDKLAEVLGINYGQLEFLLSGFPDRGKSVPFPPKDPLIYRLYEIVQNYGYAYKAVMNEKFGDGIMSAISFSTKVEKETDKDGNDWAVVTWRGKWLPYSRF.

Residues arginine 103, glutamate 106, and serine 129 contribute to the active site.

Belongs to the cyanase family.

It carries out the reaction cyanate + hydrogencarbonate + 3 H(+) = NH4(+) + 2 CO2. In terms of biological role, catalyzes the reaction of cyanate with bicarbonate to produce ammonia and carbon dioxide. This is Cyanate hydratase from Ajellomyces capsulatus (strain G186AR / H82 / ATCC MYA-2454 / RMSCC 2432) (Darling's disease fungus).